A 6548-amino-acid chain; its full sequence is MNGQAPPHDVVVANGTEKFIVPKIKKNQLGASTPSRPQAEAALPTTARSIAGVYVEASGQTQSIYAAIKQGLLPTGLGLTLLEAQAATGGLVDLAQGQLLPVSEALRRGLVGLELKEKLLAAERAVTGYPDPYGGEKLSLFQAIKKEVVDRTLGWRLLEAQLATGGLVDPTQGVQVAPELACQQGLLDKETWLSLVESEPSMGTPGFSDPNTLEQLPYSVLLGRCVQDPSSGLPLLPLKTTFHTLAGAASASMLLEAGVLNEEMVRDLQEGMLVVSDVGTRPEVRRYLEGTGGLAGVVLLPGGHKKSFFQATVEHLVSKGIALQLLEAQAATRTLVHPTTGQRLWVEEAVKAGLVGPELHEQLLVAEQAVTGYYDPFSSSRIPVFQAMKKGLVDQPLALRLLDAQLATGGLICPARRFRLPLEAALRFGCLDEETRQRLSQAMGFSDPTTHDRLGYEQLLALSVTDPETGLAFLPLPGMSHANEPQGPTFIDHCTRQALSKATTSISVGRYQGRPVSLWELLFSESVPVKKRAMLAQRHQEGALSVEELAAELKNIVEQAAATAKVTFAGLRDTVTPGELLKAEIINQDLFEQLERGQTSAQDVGSLDSVQRYLQGTGSIAGLLLPDSQERLSIYEARSKGLLRPGTALILLEAQAATGFIIDPKENKRYSVEEALRAGVIGPDVYAKLLSAEHAVTGYTDPYSGEQISLFQAMQRDLIVRDHGIRLLEAQIATGGVIDPVHSHRVPVDVAYQRGYFDQILNSILLDPSDDTKGFFDPNTHENLTYLQLLERCVHDSETGLHLLPLSSTRPQLVDSSTRQAFQKLLLSVKYGRFRGQRVSAWELVNSEYFTEDRRRQLLQRYRQRKITLEQVTQLLEKEMRRWTDITLPALQGQVTAYQLLEAHIINQELLDQVLTGTISPDALLQVGDVHRYLRGSGTVGGVLLKPSNQRISLYQAMKQKLLPPSTALALLEAQAATGTITDPCSMETLSVDEAVCRGVVGAEVYGKLKRAEHSITGYRDPFSGKKVSLFRAMKKGLVPVEQATRLLEAQVSTGGVVDPTTHLHLPMPVAVQRGCIDREMEAALSRSPETFPTPDGRGHTSYAQLLEHCLQDKASGLHLLPLTEDAPNVPTDTQIQETLQASAGTEDGLSLWDLLTSCHFTEEQRRGYLEDVKVGKISVPQLQNTVRSWVHSAKLLARARITVPGPRGEVPATWLRDAGIITQETLEALAQGMQSPDEVAKQPTVKVCLWGTGCVAGVLLQPSGTKLSIAQAVRDGLLPTGLGQQLLEAQVASGFLVNPLTNQRLSVEGAVKAGLVGMEQSEHLRQVEKAVTGYSDPFSGGSLSLWQAMEKGLVTQSEAFPLLQVQLATGGVVDPVHGVHLPQEVAYKLGLLDEQTSRVLTATGKENKLFFDPNSREKVTYQQLRELCVLDADTGLWLLPLPQGTVLEVDDHTAVALRAMKVPINMGRFQGHSVSLWDLLHSEYVGAEKRRELVALCCSGRAAALRQVIGMLTTLVEAAEKQPSQATFKGLRKQVSAGDLFRSQLITKQTLDELNQGKRTVQEVTEMDSVRRSLEGGNFIAGVLIQDTKEKMSIPEALRRHILRPGTALVLLEAQAATGFIIDPVENRKLTVEQAFQAGMFGKETYMKLLSAERAVTGYTDPYTGEQISLFQAMQRDLIVRDHGIRLLEAQIATGGIIDPVHSHRVPVDVAYQRGYFNEEMNRILSDPSDDTKGFFDPNTHENLTYLQLLERCVEDPETGLYMLEIVKKGETYTYIDEATRQALTSRTVKMYVGKFAGQTVSVWDLLSSQYFTEGRRRKLLREYRAQNIGLENLLEVITSTVEETEKQSQIFKVPGIHGDVTAAELFNSGILNKKTLDALRSGDRGFQDLRWLEDVRVYLEGSNYIAGVIAPLTQKVMSFYEASREELIPAGFAAQMLEAQAATGYLMDPCTNQRLCVDEAIAAGLVGEDLRERLVNAEMAAKGYKDPATGETIPLYQAMERKLVGREEALRLLEVQVATGGVIDPRHHHRVPLDTACQRGCMCDDSLVLIADQKHMRKRFVDPNTQEKVTYQELQDRCQREEKSGWALFPVVKDKKDIEYVDEATKRALEAEQVEVTVGRYRGQRRSVWELLNSEYVSEEKKMELVRLYKEDTTRALQKVVELILQMIADKERRSRQLWFRGLRTQVTAEELLRSEVITKQTLEDLEEGRTTVDQIERKEDVKRYLKGTSCIAGVLVPVQGEPGRQEKMSIYQAMWKGVLRPGTALVLLEAQAATGFIIDPVNNRRLSVEEAVAAGVVGGEIQEKLLSAERAVTGYTDPYTGDQISLFQAMQRDLIVRDHGIRLLEAQIATGGVIDPVHSHRVPVDVAYQRGYFDEDMNSILADPGDDTKGFFDPNTHENLTYLQLLRRCVRDPETGFYMLQLAGKGSSVHHLSEELRRALREARVTPGTGDFQGQSISVWELLFYREVPESLRQDLLRCYQAGGLTVHDVTTTLTSLLARAKDGSPRGDPQGALGKATMEVKRGHLRGHEVPVWDILTSNYVSRDTRKELLAQFSSGSLTLPMLKRRLTTIIEEAEETQESKPKPRDASLKQQDTGARGSGTSPDEGDAQDSSESARQQQEQTLRATTMQVHRGQFRDQQVSVWKVLFSSYLSETRREELLAQHLAGKLGVMELVSLLTQIIEETEERLSKVSFPGLRRQVSASELCTSGILDRDTMRELAQGTKTIHEVTEMDSVKRYLGGSSCIAGVLVPVQGEPGRQEKMSIYQAMWKGVLRPGTALVLLEAQAATGFIIDPVNNRRLSVEEAVAAGVVGGEIQEKLLSAERAVTGYTDPYTGDQISLFQAMQRDLIVRDHGIRLLEAQIATGGVIDPVHSHRVPVDVAYQRGYFDEDMNSILADPGDDTKGFFDPNTHENLTYLQLLRRCVRDPETGFYMLQLAGKGSSVHHLSEELRRALREARVTPGTGDFQGQSISVWELLFYREVPESLRQDLLRRYQAGGLTVHDVTTTLTSLLARAKDGSPRXDPQGALGKATMEVKRGHLRGHXVPVWDILTSNYVSRDTRKELLAQFSSGSLTLPMLKRRLTTIIEEAEETQESKPKPRDASLKQQDTGARGSGTSPDEGDAQDSSESARQQQEQTLRATTMQVHRGQFRDQQVSVWKVLFSSYLSETRREELLAQHLAGKLGVMELVSLLTQIIEETEERLSKVSFPGLRRQVSASELCTSGILDRDTMRELAQGTKTIHEVTEMDSVKRYLGGSSCIAGVLVPVQGEPGRQEKMSIYQAMWKGVLRPGTALVLLEAQAATGFIIDPVNNRRLSVEEAVAAGVVGGEIQEKLLSAERAVTGYTDPYTGDQISLFQAMQRDLIVRDHGIRLLEAQIATGGVIDPVHSHRVPVDVAYQRGYFDEDMNSILADPGDDTKGFFDPNTHENLTYLQLLRRCVRDPETGFYMLQLAGKGSSVHHLSEELRRALREARVTPGTGDFQGQSISVWELLFYREVPESLRQDLLRRYQAGGLTVHDVTTTLTSLLARAKDGSPRXDPQGALGKATMEVKRGHLRGHXVPVWDILTSNYVSRDTRKELLAQFSSGSLTLPMLKRRLTTIIEEAEETQESKPKPRDASLKQQDTGARGSGTSPDEGDAQDSSESARQQQEQTLRATTMQVHRGQFRDQQVSVWKVLFSSYLSETRREELLAQHLAGKLGVMELVSLLTQIIEETEERLSKVSFPGLRRQVSASELCTSGILDRDTMRELAQGTKTIHEVTEMDSVKRYLGGSSCIAGVLVPVQGEPGRQEKMSIYQAMWKGVLRPGTALVLLEAQAATGFIIDPVNNRRLSVEEAVAAGVVGGEIQEKLLSAERAVTGYTDPYTGDQISLFQAMQRDLIVRDHGIRLLEAQIATGGVIDPVHSHRVPVDVAYQRGYFDEDMNSILADPGDDTKGFFDPNTHENLTYLQLLRRCVRDPETGFYMLQLAGKGSSVHHLSEELRRALREARVTPGTGDFQGQSISVWELLFYREVPESLRQDLLRRYQAGGLTVHDVTTTLTSLLARAKDGSPRXDPQGALGKATMEVKRGHLRGHXVPVWDILTSNYVSRDTRKELLAQFSSGSLTLPMLKRRLTTIIEEAEETQESKPKPRDASLKQQDTGARGSGTSPDEGDAQDSSESARQQQEQTLRATTMQVHRGQFRDQQVSVWKVLFSSYLSETRREELLAQHLAGKLGVMELVSLLTQIIEETEERLSKVSFPGLRRQVSASELCTSGILDRDTMRELAQGTKTIHEVTEMDSVKRYLGGSSCIAGVLVPVQGEPGRQEKMSIYQAMWKGVLRPGTALVLLEAQAATGFIIDPVNNRRLSVEEAVAAGVVGGEIQEKLLSAERAVTGYTDPYTGDQISLFQAMQRDLIVRDHGIRLLEAQIATGGVIDPVHSHRVPVDVAYQRGYFDEDMNSILADPGDDTKGFFDPNTHENLTYLQLLRRCVRDPETGFYMLQLAGKGSSVHHLSEELRRALREARVTPGTGDFQGQSISVWELLFYREVPESLRQDLLRRYQAGGLTVHDVTTTLTSLLARAKDGSPRXDPQGALGKATMEVKRGHLRGHXVPVWDILTSNYVSRDTRKELLAQFSSGSLTLPMLKRRLTTIIEEAEETQESKPKPRDASLKQQDTGARGSGTSPDEGDAQDSSESARQQQEQTLRATTMQVHRGQFRDQQVSVWKVLFSSYLSETRREELLAQHLAGKLGVMELVSLLTQIIEETEERLSKVSFPGLRRQVSASELCTSGILDRDTMRELAQGTKTIHEVTEMDSVKRYLGGSSCIAGVLVPVQGEPGRQEKMSIYQAMWKGVLRPGTALVLLEAQAATGFIIDPVNNRRLSVEEAVAAGVVGGEIQEKLLSAERAVTGYTDPYTGDQISLFQAMQRDLIVRDHGIRLLEAQIATGGVIDPVHSHRVPVDVAYQRGYFDEDMNSILADPGDDTKGFFDPNTHENLTYLQLLRRCVRDPETGFYMLQLAGKGSSVHHLSEELRRALREARVTPGTGDFQGQSISVWELLFYREVPESLRQDLLRRYQAGGLTVHDVTTTLTSLLARAKDGSPRXDPQGALGKATMEVKRGHLRGHXVPVWDILTSNYVSRDTRKELLAQFSSGSLTLPMLKRRLTTIIEEAEETQESKPKPRDASLKQQDTGARGSGTSPDEGDAQDSSESARQQQEQTLRATTMQVHRGQFRDQQVSVWKVLFSSYLSETRREELLAQHLAGKLGVMELVSLLTQIIEETEERLSKVSFPGLRRQVSASELCTSGILDRDTMRELAQGTKTIHEVTEMDSVKRYLGGSSCIAGVLVPVQGEPGRQEKMSIYQAMWKGVLRPGTALVLLEAQAATGFIIDPVNNRRLSVEEAVAAGVVGGEIQEKLLSAERAVTGYTDPYTGDQISLFQAMQRDLIVRDHGIRLLEAQIATGGVIDPVHSHRVPVDVAYQRGYFDEDMNSILADPGDDTKGFFDPNTHENLTYLQLLRRCVRDPETGFYMLQLAGKGSSVHHLSEELRRALREARVTPGTGDFQGQSISVWELLFYREVPESLRQDLLRRYQAGGLTVHDVTTTLTSLLARAKDGSPRXDPQGALGKATMEVKRGHLRGHXVPVWDILTSNYVSRDTRKELLAQFSSGSLTLPMLKRRLTTIIEEAEETQESKPKPRDASLKQQDTGARGSGTSPDEGDAQDSSESARQQQEQTLRATTMQVHRGQFRDQQVSVWKVLFSSYLSETRREELLAQHLAGKLGVMELVSLLTQIIEETEERLSKVSFPGLRRQVSASELCTSGILDRDTMRELAQGTKTIHEVTEMDSVKRYLGGSSCIAGVLVPVQGEPGRQEKMSIYQAMWKGVLRPGTALVLLEAQAATGFIIDPVNNRRLSVEEAVAAGVVGGEIQEKLLSAERAVTGYTDPYTGDQISLFQAMQRDLIVRDHGIRLLEAQIATGGVIDPVHSHRVPVDVAYQRGYFDEDMNSILADPGDDTKGFFDPNTHENLTYLQLLRRCVRDPETGFYMLQLAGKGSSVHHLSEELRRALREARVTPGTGDFQGQSISVWELLFYREVPESLRQDLLRRYQAGGLTVHDVTTTLTSLLARAKDGSPREDPQGALGKATMEVKRGHLRGHVVPVWDILTSNYVSRDTRKELLAQFSSGSLTLPMLKRRLTTIIEEAEETQESKPKPRDASLKQQDTGARGSGTSPDEGDAQDSSESARQQQEQTLRATTMQVHRGQFRDQQVSVWKVLFSSYLSETRREELLAQHLAGKLGVMELVSLLTQIIEETEERLSKVSFPGLRRQVSASELCTSGILDRDTMRELAQGTKTIHEVTEMDSVKRYLGGSSCIAGVLVPVQGEPGRQEKMSIYQAMWKGVLRPGTALVLLEAQAATGFIIDPVNNRRLSVEEAVAAGVVGGEIQEKLLSAERAVTGYTDPYTGDQISLFQAMQRDLIVKNHGIRLLEAQIATGGVIDPVHSHRVPVDVAYQRGYFDQEMNSILADPGDDTKGFFDPNTHENLTYLQLLQRATIDPETGLLFLSLSKG.

Threonine 33 bears the Phosphothreonine mark. 9 Plectin repeats span residues 41 to 78, 79 to 116, 117 to 154, 155 to 192, 285 to 322, 323 to 360, 362 to 398, 399 to 436, and 437 to 470; these read AALP…TGLG, LTLL…LELK, EKLL…RTLG, WRLL…KETW, RRYL…KGIA, LQLL…PELH, QLLV…QPLA, LRLL…EETR, and QRLS…PETG. The interval 49–1123 is interaction with KRT5; that stretch reads SIAGVYVEAS…KASGLHLLPL (1075 aa). Residues 545–565 are a coiled coil; sequence SVEELAAELKNIVEQAAATAK. 5 Plectin repeats span residues 611 to 648, 649 to 686, 687 to 724, 725 to 762, and 766 to 800; these read QRYL…PGTA, LILL…PDVY, AKLL…RDHG, IRLL…QILN, and LDPS…SETG. Residues 851-886 are a coiled coil; that stretch reads TEDRRRQLLQRYRQRKITLEQVTQLLEKEMRRWTDI. Plectin repeat units lie at residues 931 to 968, 969 to 1006, 1007 to 1044, 1224 to 1284, 1285 to 1322, 1323 to 1360, 1361 to 1398, and 1402 to 1436; these read HRYL…PSTA, LALL…AEVY, GKLK…VEQA, QETL…TGLG, QQLL…MEQS, EHLR…QSEA, FPLL…EQTS, and TATG…ADTG. Threonine 1551 is subject to Phosphothreonine. 5 Plectin repeats span residues 1572–1609, 1610–1647, 1648–1685, 1686–1723, and 1727–1761; these read RRSL…PGTA, LVLL…KETY, MKLL…RDHG, IRLL…EEMN, and SDPS…PETG. Positions 1580-6545 are interaction with KRT5; the sequence is FIAGVLIQDT…PETGLLFLSL (4966 aa). Positions 1819-1851 form a coiled coil; that stretch reads RKLLREYRAQNIGLENLLEVITSTVEETEKQSQ. 9 Plectin repeats span residues 1898 to 1935, 1936 to 1973, 1974 to 2011, 2012 to 2049, 2225 to 2267, 2268 to 2305, 2306 to 2343, 2344 to 2381, and 2385 to 2419; these read RVYL…AGFA, AQML…EDLR, ERLV…REEA, LRLL…DDSL, KRYL…PGTA, LVLL…GEIQ, EKLL…RDHG, IRLL…EDMN, and ADPG…PETG. Residues serine 2430 and serine 2508 each carry the phosphoserine modification. The disordered stretch occupies residues 2578 to 2626; the sequence is AEETQESKPKPRDASLKQQDTGARGSGTSPDEGDAQDSSESARQQQEQT. A compositionally biased stretch (basic and acidic residues) spans 2582 to 2592; it reads QESKPKPRDAS. Composition is skewed to polar residues over residues 2593-2606 and 2615-2626; these read LKQQ…SGTS and SSESARQQQEQT. Plectin repeat units lie at residues 2740–2782, 2783–2820, 2821–2858, 2859–2896, and 2900–2934; these read KRYL…PGTA, LVLL…GEIQ, EKLL…RDHG, IRLL…EDMN, and ADPG…PETG. Positions 2748-2940 are interaction with KRT14; that stretch reads CIAGVLVPVQ…PETGFYMLQL (193 aa). Residues 3093-3144 form a disordered region; it reads AEETQESKPKPRDASLKQQDTGARGSGTSPDEGDAQDSSESARQQQEQTLRA. Over residues 3097 to 3107 the composition is skewed to basic and acidic residues; that stretch reads QESKPKPRDAS. Composition is skewed to polar residues over residues 3108–3121 and 3130–3144; these read LKQQ…SGTS and SSES…TLRA. Position 3220 is a phosphoserine (serine 3220). 5 Plectin repeats span residues 3255–3297, 3298–3335, 3336–3373, 3374–3411, and 3415–3449; these read KRYL…PGTA, LVLL…GEIQ, EKLL…RDHG, IRLL…EDMN, and ADPG…PETG. Residues serine 3460 and serine 3538 each carry the phosphoserine modification. The tract at residues 3608–3659 is disordered; that stretch reads AEETQESKPKPRDASLKQQDTGARGSGTSPDEGDAQDSSESARQQQEQTLRA. Basic and acidic residues predominate over residues 3612–3622; that stretch reads QESKPKPRDAS. 2 stretches are compositionally biased toward polar residues: residues 3623–3636 and 3645–3659; these read LKQQ…SGTS and SSES…TLRA. Serine 3735 is modified (phosphoserine). 5 Plectin repeats span residues 3770–3812, 3813–3850, 3851–3888, 3889–3926, and 3930–3964; these read KRYL…PGTA, LVLL…GEIQ, EKLL…RDHG, IRLL…EDMN, and ADPG…PETG. Phosphoserine is present on residues serine 3975 and serine 4053. The tract at residues 4123 to 4174 is disordered; it reads AEETQESKPKPRDASLKQQDTGARGSGTSPDEGDAQDSSESARQQQEQTLRA. The segment covering 4127-4137 has biased composition (basic and acidic residues); the sequence is QESKPKPRDAS. 2 stretches are compositionally biased toward polar residues: residues 4138-4151 and 4160-4174; these read LKQQ…SGTS and SSES…TLRA. Plectin repeat units lie at residues 4285 to 4327, 4328 to 4365, 4366 to 4403, 4404 to 4441, and 4445 to 4479; these read KRYL…PGTA, LVLL…GEIQ, EKLL…RDHG, IRLL…EDMN, and ADPG…PETG. The tract at residues 4638-4689 is disordered; that stretch reads AEETQESKPKPRDASLKQQDTGARGSGTSPDEGDAQDSSESARQQQEQTLRA. The span at 4642 to 4652 shows a compositional bias: basic and acidic residues; sequence QESKPKPRDAS. 2 stretches are compositionally biased toward polar residues: residues 4653-4666 and 4675-4689; these read LKQQ…SGTS and SSES…TLRA. Phosphoserine is present on serine 4765. Plectin repeat units follow at residues 4800 to 4842, 4843 to 4880, 4881 to 4918, 4919 to 4956, and 4960 to 4994; these read KRYL…PGTA, LVLL…GEIQ, EKLL…RDHG, IRLL…EDMN, and ADPG…PETG. A phosphoserine mark is found at serine 5005 and serine 5083. The disordered stretch occupies residues 5153–5204; that stretch reads AEETQESKPKPRDASLKQQDTGARGSGTSPDEGDAQDSSESARQQQEQTLRA. Residues 5157–5167 are compositionally biased toward basic and acidic residues; the sequence is QESKPKPRDAS. Polar residues-rich tracts occupy residues 5168–5181 and 5190–5204; these read LKQQ…SGTS and SSES…TLRA. 5 Plectin repeats span residues 5315 to 5357, 5358 to 5395, 5396 to 5433, 5434 to 5471, and 5475 to 5509; these read KRYL…PGTA, LVLL…GEIQ, EKLL…RDHG, IRLL…EDMN, and ADPG…PETG. The segment at 5668–5719 is disordered; it reads AEETQESKPKPRDASLKQQDTGARGSGTSPDEGDAQDSSESARQQQEQTLRA. The span at 5672-5682 shows a compositional bias: basic and acidic residues; sequence QESKPKPRDAS. Polar residues-rich tracts occupy residues 5683–5696 and 5705–5719; these read LKQQ…SGTS and SSES…TLRA. Serine 5795 is subject to Phosphoserine. 5 Plectin repeats span residues 5830–5872, 5873–5910, 5911–5948, 5949–5986, and 5990–6024; these read KRYL…PGTA, LVLL…GEIQ, EKLL…RDHG, IRLL…EDMN, and ADPG…PETG. Phosphoserine occurs at positions 6035 and 6113. The disordered stretch occupies residues 6183–6234; sequence AEETQESKPKPRDASLKQQDTGARGSGTSPDEGDAQDSSESARQQQEQTLRA. A compositionally biased stretch (basic and acidic residues) spans 6187–6197; it reads QESKPKPRDAS. Polar residues-rich tracts occupy residues 6198-6211 and 6220-6234; these read LKQQ…SGTS and SSES…TLRA. Serine 6310 is subject to Phosphoserine. Plectin repeat units lie at residues 6345–6387, 6388–6425, 6426–6463, 6464–6501, and 6505–6539; these read KRYL…PGTA, LVLL…GEIQ, EKLL…KNHG, IRLL…QEMN, and ADPG…PETG.

The protein belongs to the plakin or cytolinker family. As to quaternary structure, interacts with KRT5, KRT14 and KRT5/KRT14 heterotetramer; interacts preferentially with assembled filaments rather than keratin monomers. Interacts with KRT8 and KRT18 and KRT8/KRT18 heterotetramer; interacts preferentially with assembled filaments rather than keratin monomers. Interacts with KRT1, VIM and DES; interaction is stronger with KRT1 than with VIM or DES; interaction is dependent of higher-order structure of intermediate filament. As to expression, high levels in skin, small intestine and salivary gland. Lower levels in lung, uterus and liver. Not detected in brain, kidney, muscle, heart or spleen. In skin, expressed in all epidermal layers but not in the dermis. In intestine, expressed exclusively in the epithelial cell layer of the villi. In liver, expressed at hepatocyte margins. Around the region of the wound, expressed in the upper half of the epidermis. Weakly expressed on the basilar side of the suprabasal layer of the epidermis at the wound's edge. Expressed strongly in the upper layer of the epidermis, especially in larger keratinocytes. Expressed in undifferentiated primary keratinocytes. Strongly expressed in ductal cells, and also expressed in acinar cells. Expressed in hepatocytes and cholangiocytes.

Its subcellular location is the cytoplasm. The protein resides in the cytoskeleton. It is found in the apicolateral cell membrane. It localises to the basolateral cell membrane. The protein localises to the cell junction. Its subcellular location is the hemidesmosome. The protein resides in the tight junction. It is found in the cell projection. In terms of biological role, cytoskeletal linker protein that connects to intermediate filaments and controls their reorganization in response to stress. In response to mechanical stress like wound healing, is associated with the machinery for cellular motility by slowing down keratinocyte migration and proliferation and accelerating keratin bundling in proliferating keratinocytes thus contributing to tissue architecture. However in wound healing in corneal epithelium also positively regulates cell differentiation and proliferation and negatively regulates migration thereby controlling corneal epithelium morphogenesis and integrity. In response to cellular stress, plays a role in keratin filament reorganization, probably by protecting keratin filaments against disruption. During liver and pancreas injuries, plays a protective role by chaperoning disease-induced intermediate filament reorganization. This Mus musculus (Mouse) protein is Epiplakin.